A 323-amino-acid chain; its full sequence is Ubiquinone biosynthesis protein COQ4, mitochondrial (323 aa).

Positions 209, 210, 213, and 225 each coordinate Zn(2+).

The protein belongs to the COQ4 family. Component of a multi-subunit COQ enzyme complex, composed of at least COQ3, COQ4, COQ5, COQ6, COQ7 and COQ9. The cofactor is Zn(2+).

It is found in the mitochondrion inner membrane. The catalysed reaction is a 4-hydroxy-3-methoxy-5-(all-trans-polyprenyl)benzoate + H(+) = a 2-methoxy-6-(all-trans-polyprenyl)phenol + CO2. The protein operates within cofactor biosynthesis; ubiquinone biosynthesis. Functionally, lyase that catalyzes the C1-decarboxylation of 4-hydroxy-3-methoxy-5-(all-trans-polyprenyl)benzoic acid into 2-methoxy-6-(all-trans-polyprenyl)phenol during ubiquinone biosynthesis. In Debaryomyces hansenii (strain ATCC 36239 / CBS 767 / BCRC 21394 / JCM 1990 / NBRC 0083 / IGC 2968) (Yeast), this protein is Ubiquinone biosynthesis protein COQ4, mitochondrial.